A 331-amino-acid chain; its full sequence is tRNA (guanine-N(7)-)-methyltransferase (331 aa).

Glu29, Glu55, and Asp105 together coordinate S-adenosyl-L-methionine. Asp105 is an active-site residue. 2 residues coordinate substrate: Lys109 and Asp141.

The protein belongs to the class I-like SAM-binding methyltransferase superfamily. TrmB family.

It catalyses the reaction guanosine(46) in tRNA + S-adenosyl-L-methionine = N(7)-methylguanosine(46) in tRNA + S-adenosyl-L-homocysteine. It functions in the pathway tRNA modification; N(7)-methylguanine-tRNA biosynthesis. Functionally, catalyzes the formation of N(7)-methylguanine at position 46 (m7G46) in tRNA. The sequence is that of tRNA (guanine-N(7)-)-methyltransferase from Deinococcus geothermalis (strain DSM 11300 / CIP 105573 / AG-3a).